A 245-amino-acid chain; its full sequence is PF03932 family protein CutC (245 aa).

It belongs to the CutC family.

Its subcellular location is the cytoplasm. The protein is PF03932 family protein CutC of Sinorhizobium medicae (strain WSM419) (Ensifer medicae).